The sequence spans 160 residues: Nucleotide-binding protein CPS_1098 (160 aa).

It belongs to the YajQ family.

Its function is as follows. Nucleotide-binding protein. This Colwellia psychrerythraea (strain 34H / ATCC BAA-681) (Vibrio psychroerythus) protein is Nucleotide-binding protein CPS_1098.